Reading from the N-terminus, the 913-residue chain is Epithelial discoidin domain-containing receptor 1 (913 aa).

Positions 1–18 (MGPEALSSLLLLLLVASG) are cleaved as a signal peptide. Topologically, residues 21-417 (DMKGHFDPAK…VAKAEGSPTA (397 aa)) are extracellular. The F5/8 type C domain occupies 31 to 185 (CRYALGMQDR…VCLRVELYGC (155 aa)). Intrachain disulfides connect Cys31–Cys185 and Cys74–Cys177. The DS-like domain stretch occupies residues 192–367 (LSYTAPVGQT…LFSEISFISD (176 aa)). Asn211, Gln230, Asp233, Val235, Tyr253, and Tyr255 together coordinate Ca(2+). Residue Asn211 is glycosylated (N-linked (GlcNAc...) asparagine). Asn260 is a glycosylation site (N-linked (GlcNAc...) asparagine). Cys303 and Cys348 are joined by a disulfide. Ser360 and Glu361 together coordinate Ca(2+). N-linked (GlcNAc...) asparagine glycans are attached at residues Asn370 and Asn394. Residues 418–438 (ILIGCLVAIILLLLLIIALML) form a helical membrane-spanning segment. Residues 439-913 (WRLHWRRLLS…FLAEDALNTV (475 aa)) lie on the Cytoplasmic side of the membrane. The tract at residues 470–499 (ILINNRPGPREPPPYQEPRPRGNPPHSAPC) is disordered. Residues 479 to 496 (REPPPYQEPRPRGNPPHS) are compositionally biased toward pro residues. A PPxY motif motif is present at residues 481–484 (PPPY). 3 positions are modified to phosphotyrosine; by autocatalysis: Tyr484, Tyr513, and Tyr520. Positions 610–905 (LRFKEKLGEG…PPFSQLHRFL (296 aa)) constitute a Protein kinase domain. ATP is bound at residue 616–624 (LGEGQFGEV). Position 631 is a phosphoserine (Ser631). Position 655 (Lys655) interacts with ATP. Tyr740 bears the Phosphotyrosine; by autocatalysis mark. Asp766 (proton acceptor) is an active-site residue. A phosphotyrosine; by autocatalysis mark is found at Tyr792, Tyr796, and Tyr797.

Belongs to the protein kinase superfamily. Tyr protein kinase family. Insulin receptor subfamily. As to quaternary structure, homodimer. Interacts (via PPxY motif) with WWC1 (via WW domains) in a collagen-regulated manner. Forms a tripartite complex with WWC1 and PRKCZ, but predominantly in the absence of collagen. Interacts (tyrosine phosphorylated) with SHC1. Interacts with SRC. Interacts with MYH9. Interacts with CDH1. Interacts with PTPN11. Interacts with NCK2. Post-translationally, autophosphorylated in response to fibrillar collagen binding. In terms of processing, glycosylation of Asn-211, but apparently not of Asn-260 or Asn-394, prevents autophosphorylation from occurring in the absence of collagen. Detected in T-47D, MDA-MB-175 and HBL-100 breast carcinoma cells, A-431 epidermoid carcinoma cells, SW48 and SNU-C2B colon carcinoma cells and Hs 294T melanoma cells (at protein level). Expressed at low levels in most adult tissues and is highest in the brain, lung, placenta and kidney. Lower levels of expression are detected in melanocytes, heart, liver, skeletal muscle and pancreas. Abundant in breast carcinoma cell lines. In the colonic mucosa, expressed in epithelia but not in the connective tissue of the lamina propria. In the thyroid gland, expressed in the epithelium of the thyroid follicles. In pancreas, expressed in the islets of Langerhans cells, but not in the surrounding epithelial cells of the exocrine pancreas. In kidney, expressed in the epithelia of the distal tubules. Not expressed in connective tissue, endothelial cells, adipose tissue, muscle cells or cells of hematopoietic origin.

Its subcellular location is the cell membrane. The protein resides in the secreted. The enzyme catalyses L-tyrosyl-[protein] + ATP = O-phospho-L-tyrosyl-[protein] + ADP + H(+). Inhibited by the multi-targeted cancer drugs imatinib and ponatinib. Tyrosine kinase that functions as a cell surface receptor for fibrillar collagen and regulates cell attachment to the extracellular matrix, remodeling of the extracellular matrix, cell migration, differentiation, survival and cell proliferation. Collagen binding triggers a signaling pathway that involves SRC and leads to the activation of MAP kinases. Regulates remodeling of the extracellular matrix by up-regulation of the matrix metalloproteinases MMP2, MMP7 and MMP9, and thereby facilitates cell migration and wound healing. Required for normal blastocyst implantation during pregnancy, for normal mammary gland differentiation and normal lactation. Required for normal ear morphology and normal hearing. Promotes smooth muscle cell migration, and thereby contributes to arterial wound healing. Also plays a role in tumor cell invasion. Phosphorylates PTPN11. The protein is Epithelial discoidin domain-containing receptor 1 (DDR1) of Homo sapiens (Human).